Here is a 206-residue protein sequence, read N- to C-terminus: tRNA(Phe) 7-((3-amino-3-carboxypropyl)-4-demethylwyosine(37)-N(4))-methyltransferase 2 (206 aa).

It belongs to the TYW3 family.

The catalysed reaction is 4-demethyl-7-[(3S)-3-amino-3-carboxypropyl]wyosine(37) in tRNA(Phe) + S-adenosyl-L-methionine = 7-[(3S)-3-amino-3-carboxypropyl]wyosine(37) in tRNA(Phe) + S-adenosyl-L-homocysteine + H(+). Functionally, S-adenosyl-L-methionine-dependent methyltransferase that acts as a component of the wyosine derivatives biosynthesis pathway. Probably methylates N-4 position of wybutosine-86 to produce wybutosine-72. The sequence is that of tRNA(Phe) 7-((3-amino-3-carboxypropyl)-4-demethylwyosine(37)-N(4))-methyltransferase 2 from Pyrococcus horikoshii (strain ATCC 700860 / DSM 12428 / JCM 9974 / NBRC 100139 / OT-3).